Consider the following 1145-residue polypeptide: Adenylate cyclase type 3 (1145 aa).

At 1-79 (MPRNQGFSDP…FKRQRHETLL (79 aa)) the chain is on the cytoplasmic side. 5 helical membrane passes run 80-100 (VLVV…AVVF), 105-125 (LAPL…FVLC), 139-159 (VPYL…GLNF), 173-193 (AFFV…IVII), and 226-246 (ILAN…SYYM). 3 residues coordinate Mg(2+): Asp324, Ile325, and Asp368. ATP is bound by residues 324 to 329 (DIVGFT) and 366 to 368 (LGD). The helical transmembrane segment at 381–401 (EDHAVCSILMGLAMVEAISYV) threads the bilayer. Over 402-631 (REKTKTGVDM…RYSVEKEKQS (230 aa)) the chain is Cytoplasmic. Arg412 is a binding site for ATP. Lys465 is covalently cross-linked (Glycyl lysine isopeptide (Lys-Gly) (interchain with G-Cter in SUMO3)). A disordered region spans residues 504–564 (QNGLNGSAVP…DNPSFPNPRR (61 aa)). 2 stretches are compositionally biased toward low complexity: residues 516–526 (APASSKPSSPA) and 535–544 (GSAHASGSTS). Ser524 bears the Phosphoserine mark. Ser579 is modified (phosphoserine). A run of 3 helical transmembrane segments spans residues 632-652 (GAAF…EILI), 663-683 (FVVG…AIFP), and 707-727 (WAML…LSCL). Residue Asn735 is glycosylated (N-linked (GlcNAc...) asparagine). The next 3 helical transmembrane spans lie at 753–773 (YNYV…VSHM), 774–794 (VKLT…LYAW), and 834–854 (LPLV…MLSF). Topologically, residues 855-1145 (YYFSRHVEKL…TLPHQVVDNP (291 aa)) are cytoplasmic. ATP is bound by residues Lys976, 1063-1065 (DIW), and 1070-1074 (NVASR). Residue Ser1077 is modified to Phosphoserine; by CaMK2. Lys1110 is a binding site for ATP.

This sequence belongs to the adenylyl cyclase class-4/guanylyl cyclase family. Mg(2+) is required as a cofactor. It depends on Mn(2+) as a cofactor. Post-translationally, N-glycosylated. In terms of processing, rapidly phosphorylated after stimulation by odorants or forskolin. Phosphorylation by CaMK2 at Ser-1077 down-regulates enzyme activity. Sumoylated. Sumoylation is required for targeting of olfactory cilia. In terms of tissue distribution, detected in the acrosomal region of epididymal spermatozoa, the acrosomal region of round spermatids and in elongating spermatids. Detected in cilia in the olfactory epithelium (at protein level). Detected in olfactory epithelium neurons. Detected in brain, testis, late pachytene spermatocytes, round spermatids and elongating spermatids.

It is found in the cell membrane. The protein localises to the cell projection. The protein resides in the cilium. It localises to the golgi apparatus. Its subcellular location is the cytoplasm. The catalysed reaction is ATP = 3',5'-cyclic AMP + diphosphate. Its activity is regulated as follows. Specifically activated by the G alpha protein GNAL/G(olf) in signaling cascades triggered by odorant receptors. Activated by forskolin. After forskolin treatment, activity is further increased by calcium/calmodulin. In the absence of forskolin, calcium/calmodulin has little effect on enzyme activity. Its function is as follows. Catalyzes the formation of the signaling molecule cAMP in response to G-protein signaling. Participates in signaling cascades triggered by odorant receptors via its function in cAMP biosynthesis: specifically activated by G alpha protein GNAL/G(olf) in olfactory epithelium. Required for the perception of odorants. Required for normal sperm motility and normal male fertility. Plays a role in regulating insulin levels and body fat accumulation in response to a high fat diet. This is Adenylate cyclase type 3 (Adcy3) from Mus musculus (Mouse).